A 353-amino-acid polypeptide reads, in one-letter code: Ribosome biogenesis protein BRX1 homolog (353 aa).

Basic residues predominate over residues 1–10 (MAATKRKRRG). Positions 1–46 (MAATKRKRRGGFAVQAKKPKRNEKDAEPPAKRHATAEEVEEEERDR) are disordered. The segment covering 22–36 (NEKDAEPPAKRHATA) has biased composition (basic and acidic residues). Residues 60 to 249 (ERILIFSSRG…LIKIFQGSFG (190 aa)) enclose the Brix domain. A Glycyl lysine isopeptide (Lys-Gly) (interchain with G-Cter in SUMO2) cross-link involves residue lysine 160. Serine 261 carries the post-translational modification Phosphoserine. At lysine 276 the chain carries N6-acetyllysine. Residues lysine 314 and lysine 322 each participate in a glycyl lysine isopeptide (Lys-Gly) (interchain with G-Cter in SUMO2) cross-link.

Belongs to the BRX1 family.

Its subcellular location is the nucleus. It is found in the nucleolus. Its function is as follows. Required for biogenesis of the 60S ribosomal subunit. This chain is Ribosome biogenesis protein BRX1 homolog (BRIX1), found in Pongo abelii (Sumatran orangutan).